Consider the following 311-residue polypeptide: Putative F-box protein At3g28280 (311 aa).

The 43-residue stretch at 1-43 (MNSLPEDLLAMILVKLPIKIFTTFKIVCTQWESMVDSPYFRDL) folds into the F-box domain.

In Arabidopsis thaliana (Mouse-ear cress), this protein is Putative F-box protein At3g28280.